The following is a 675-amino-acid chain: Putative methyl-accepting chemotaxis AlkN (675 aa).

The next 2 helical transmembrane spans lie at 24 to 44 (IALYVGLAIFIVLALANFLLS) and 303 to 323 (FPSVWLGGVSAGLAVLFFFII). Positions 343-394 (QRNQAAILRLLDELGDLADGDLTVQATVTEDFTGAIADSINYSIDQLRNLVQ) constitute an HAMP domain. A Methyl-accepting transducer domain is found at 399 to 635 (SAVQVASAAQ…HISNTMNVIQ (237 aa)).

It belongs to the methyl-accepting chemotaxis (MCP) protein family.

The protein resides in the membrane. It functions in the pathway hydrocarbon metabolism; alkane degradation. Chemotactic-signal transducers respond to changes in the concentration of attractants and repellents in the environment, transduce a signal from the outside to the inside of the cell, and facilitate sensory adaptation through the variation of the level of methylation. The sequence is that of Putative methyl-accepting chemotaxis AlkN from Alcanivorax borkumensis (strain ATCC 700651 / DSM 11573 / NCIMB 13689 / SK2).